Here is a 195-residue protein sequence, read N- to C-terminus: Imidazoleglycerol-phosphate dehydratase (195 aa).

The protein belongs to the imidazoleglycerol-phosphate dehydratase family.

Its subcellular location is the cytoplasm. It carries out the reaction D-erythro-1-(imidazol-4-yl)glycerol 3-phosphate = 3-(imidazol-4-yl)-2-oxopropyl phosphate + H2O. Its pathway is amino-acid biosynthesis; L-histidine biosynthesis; L-histidine from 5-phospho-alpha-D-ribose 1-diphosphate: step 6/9. This is Imidazoleglycerol-phosphate dehydratase from Ruegeria pomeroyi (strain ATCC 700808 / DSM 15171 / DSS-3) (Silicibacter pomeroyi).